Here is a 235-residue protein sequence, read N- to C-terminus: uncharacterized protein (235 aa).

A run of 7 helical transmembrane segments spans residues 2 to 22 (VIGP…GALL), 34 to 54 (MTSI…VKCA), 56 to 76 (LPAM…CLLE), 102 to 122 (FIQN…GIFG), 147 to 167 (MIFA…LLII), 178 to 198 (ILPL…GLLL), and 210 to 230 (MFPV…SAAW).

It localises to the cell membrane. This is an uncharacterized protein from Escherichia coli (strain K12).